A 266-amino-acid chain; its full sequence is Uxu operon regulator (266 aa).

In terms of domain architecture, HTH gntR-type spans 23–91; the sequence is NRTYTRIGQL…KGSGVYVVRT (69 aa). The segment at residues 51–70 is a DNA-binding region (H-T-H motif); it reads EREISEKFGVSRTIVREAMV.

In terms of biological role, repressor for the uxuRBA operon. The chain is Uxu operon regulator (uxuR) from Haemophilus influenzae (strain ATCC 51907 / DSM 11121 / KW20 / Rd).